A 163-amino-acid chain; its full sequence is UPF0416 protein RBE_1121 (163 aa).

This sequence belongs to the UPF0416 family.

The sequence is that of UPF0416 protein RBE_1121 from Rickettsia bellii (strain RML369-C).